A 653-amino-acid chain; its full sequence is 4-alpha-glucanotransferase (653 aa).

The active-site Nucleophile is the Glu-123. Asp-214 functions as the Proton donor in the catalytic mechanism.

It belongs to the glycosyl hydrolase 57 family.

The enzyme catalyses Transfers a segment of a (1-&gt;4)-alpha-D-glucan to a new position in an acceptor, which may be glucose or a (1-&gt;4)-alpha-D-glucan.. This chain is 4-alpha-glucanotransferase, found in Thermococcus kodakarensis (strain ATCC BAA-918 / JCM 12380 / KOD1) (Pyrococcus kodakaraensis (strain KOD1)).